The primary structure comprises 66 residues: UPF0370 protein YpfN (66 aa).

A helical transmembrane segment spans residues 4–24 (LAKYWWILVLVFLVGVLLNVI). The tract at residues 39-66 (KPELPPHRDFNDKWDDEDDWPKKDQPKK) is disordered. Over residues 42 to 51 (LPPHRDFNDK) the composition is skewed to basic and acidic residues.

It belongs to the UPF0370 family.

The protein localises to the cell membrane. This is UPF0370 protein YpfN from Salmonella paratyphi C (strain RKS4594).